The primary structure comprises 419 residues: Synaptotagmin-1 (419 aa).

The Vesicular segment spans residues 1 to 58; the sequence is MVSESHHEALAAPPVTTVATVLPSNATEPASPGEGKEDAFSKLKEKFMNELHKIPLPP. Asn25 is a glycosylation site (N-linked (GlcNAc...) asparagine). Residues 59–80 form a helical membrane-spanning segment; it reads WALIAIAIVAVLLVLTCCFCIC. 5 S-palmitoyl cysteine lipidation sites follow: Cys75, Cys76, Cys78, Cys80, and Cys83. The Cytoplasmic portion of the chain corresponds to 81-419; the sequence is KKCLFKKKNK…EVDAMLAVKK (339 aa). Positions 108 to 139 are disordered; sequence KDLGKTMKDQDDDAETGLTDGEEKEEPKEEEK. Positions 117 to 131 are enriched in acidic residues; the sequence is QDDDAETGLTDGEEK. Residue Thr126 is modified to Phosphothreonine. A phospholipid binding region spans residues 133–379; the sequence is EPKEEEKLGK…AIGKVFVGYN (247 aa). In terms of domain architecture, C2 1 spans 139-258; that stretch reads KLGKLQYSLD…DFGHVTEEWR (120 aa). 3 residues coordinate Ca(2+): Leu169, Asp170, and Asp176. Phosphotyrosine is present on Tyr227. The Ca(2+) site is built by Asp228, Phe229, Asp230, Ser233, Lys234, and Asp236. Ser262 carries the phosphoserine modification. The 134-residue stretch at 270–403 folds into the C2 2 domain; it reads KLGDICFSLR…NPRRPIAQWH (134 aa). 2 residues coordinate Ca(2+): Asp301 and Asp307. 2 positions are modified to phosphoserine: Ser340 and Ser342. Residues Asp361, Asp363, and Asp369 each coordinate Ca(2+).

This sequence belongs to the synaptotagmin family. In terms of assembly, homotetramer. Heterodimer; heterodimerizes with SYT2 in presence of calcium. Interacts with SCAMP5. Interacts with STON2. Forms a complex with SV2B, syntaxin 1 and SNAP25. Interacts with SV2A, SV2B and SV2C. Interacts with RIMS1. Interacts with PRRT2. Interacts with DNAJC5 in a phosphorylation-dependent manner. Interacts (via N-terminus) with RAB3A. Interacts with SYT12. Interacts with calmodulin. Interacts with DNM1 (via C-terminal proline-rich domain (PRD)); this interaction facilitates vesicle fission during clathrin-mediated endocytosis (CME). It depends on Ca(2+) as a cofactor. In terms of processing, glycosylated.

It localises to the cytoplasmic vesicle. The protein resides in the secretory vesicle membrane. Its subcellular location is the secretory vesicle. It is found in the synaptic vesicle membrane. The protein localises to the chromaffin granule membrane. It localises to the cytoplasm. Calcium sensor that participates in triggering neurotransmitter release at the synapse. May have a regulatory role in the membrane interactions during trafficking of synaptic vesicles at the active zone of the synapse. It binds acidic phospholipids with a specificity that requires the presence of both an acidic head group and a diacyl backbone. A Ca(2+)-dependent interaction between synaptotagmin and putative receptors for activated protein kinase C has also been reported. It can bind to at least three additional proteins in a Ca(2+)-independent manner; these are neurexins, syntaxin and AP2. Plays a role in dendrite formation by melanocytes. The polypeptide is Synaptotagmin-1 (Pongo abelii (Sumatran orangutan)).